Here is a 473-residue protein sequence, read N- to C-terminus: Histone-lysine N-methyltransferase ATXR2 (473 aa).

An SET domain is found at 33-441 (KLITSRRCNG…KNEEVTISYI (409 aa)). The MYND-type; degenerate zinc finger occupies 134 to 203 (EEQCGGSSSS…DWESSHSLLC (70 aa)). Zn(2+)-binding residues include C176, C180, H199, and C203. Y440 contributes to the S-adenosyl-L-methionine binding site.

It belongs to the class V-like SAM-binding methyltransferase superfamily. Histone-lysine methyltransferase family. TRX/MLL subfamily. In terms of assembly, interacts with JMJ30. Binds to ARF7 and ARF19 in the nucleus.

Its subcellular location is the nucleus. It catalyses the reaction L-lysyl-[histone] + S-adenosyl-L-methionine = N(6)-methyl-L-lysyl-[histone] + S-adenosyl-L-homocysteine + H(+). In terms of biological role, histone methyltransferase that methylates 'Lys-36' (H3K36me) of histone H3 to produce H3K36me3. Promotes early stages of cellular dedifferentiation through H3K36me3-dependent, and to a lesser degree H3K4me3-dependent, activation of Lateral organ Boundaries-Domain (LBD) (e.g. LBD16 and LBD29) genes. Positive regulator of root organogenesis including lateral root formation as well as adventitious root formation from wounded leaf tissues. Recruited by JMJ30/ARF (e.g. ARF7 and ARF19) complexes to promote the deposition of H3K36me3 and, to a lower extent, H3K4me3 at LBD genes promoters, thus ensuring their stable activation during callus formation on callus-inducing medium (CIM). This is Histone-lysine N-methyltransferase ATXR2 from Arabidopsis thaliana (Mouse-ear cress).